The following is a 482-amino-acid chain: MTTRRLTRQHLLANTLGNNDENHPSNHIARAKSSLHSSENSLVNGKKATVSSTNVPKKRHALDDVSNFHNKEGVPLASKNTNVRHTTASVSTRRALEEKSIIPATDDEPASKKRRQPSVFNSSVPSLPQHLSTKSHSVSTHGVDAFHKDQATIPKKLKKDVDERVVSKDIPKLHRDSVESPESQDWDDLDAEDWADPLMVSEYVVDIFEYLNELEIETMPSPTYMDRQKELAWKMRGILTDWLIEVHSRFRLLPETLFLAVNIIDRFLSLRVCSLNKLQLVGIAALFIASKYEEVMCPSVQNFVYMADGGYDEEEILQAERYILRVLEFNLAYPNPMNFLRRISKADFYDIQTRTVAKYLVEIGLLDHKLLPYPPSQQCAAAMYLAREMLGRGPWNRNLVHYSGYEEYQLISVVKKMINYLQKPVQHEAFFKKYASKKFMKASLFVRDWIKKNSIPLGDDADEDYTFHKQKRIQHDMKDEEW.

Composition is skewed to polar residues over residues 35–55 (LHSSENSLVNGKKATVSSTNV), 78–92 (SKNTNVRHTTASVST), and 118–140 (SVFNSSVPSLPQHLSTKSHSVST). The interval 35–140 (LHSSENSLVN…LSTKSHSVST (106 aa)) is disordered. The Cyclin N-terminal domain occupies 206–332 (DIFEYLNELE…ILRVLEFNLA (127 aa)).

The protein belongs to the cyclin family. Cyclin AB subfamily. As to quaternary structure, interacts with cdc2. Interacts with rum1. Associates with microtubules. Also interacts with cdc11.

The protein localises to the nucleus. Its subcellular location is the cytoplasm. It is found in the cytoskeleton. The protein resides in the microtubule organizing center. It localises to the spindle pole body. Its function is as follows. Essential for the control of the cell cycle at the G2/M (mitosis) transition. Interacts with the cdc2 protein kinase to form MPF. G2/M cyclins accumulate steadily during G2 and are abruptly destroyed at mitosis. Involved in the reorganization of the cytoskeleton on transition from G2 to mitosis. Association with rum1 promotes its proteolysis during G1. Also essential for initiation of meiosis II. The sequence is that of G2/mitotic-specific cyclin cdc13 from Schizosaccharomyces pombe (strain 972 / ATCC 24843) (Fission yeast).